The primary structure comprises 322 residues: Sulfate adenylyltransferase subunit 2 (322 aa).

This sequence belongs to the PAPS reductase family. CysD subfamily. In terms of assembly, heterodimer composed of CysD, the smaller subunit, and CysN.

The catalysed reaction is sulfate + ATP + H(+) = adenosine 5'-phosphosulfate + diphosphate. It functions in the pathway sulfur metabolism; hydrogen sulfide biosynthesis; sulfite from sulfate: step 1/3. Its function is as follows. With CysN forms the ATP sulfurylase (ATPS) that catalyzes the adenylation of sulfate producing adenosine 5'-phosphosulfate (APS) and diphosphate, the first enzymatic step in sulfur assimilation pathway. APS synthesis involves the formation of a high-energy phosphoric-sulfuric acid anhydride bond driven by GTP hydrolysis by CysN coupled to ATP hydrolysis by CysD. The protein is Sulfate adenylyltransferase subunit 2 of Bradyrhizobium sp. (strain BTAi1 / ATCC BAA-1182).